The sequence spans 273 residues: Dermonecrotic toxin LdSicTox-alphaIB3ai (273 aa).

Residue His-5 is part of the active site. 2 residues coordinate Mg(2+): Glu-25 and Asp-27. Residue His-41 is the Nucleophile of the active site. 2 disulfide bridges follow: Cys-45/Cys-51 and Cys-47/Cys-190. Asp-85 contacts Mg(2+).

This sequence belongs to the arthropod phospholipase D family. Class II subfamily. Mg(2+) is required as a cofactor. In terms of tissue distribution, expressed by the venom gland.

It localises to the secreted. It carries out the reaction an N-(acyl)-sphingosylphosphocholine = an N-(acyl)-sphingosyl-1,3-cyclic phosphate + choline. The catalysed reaction is an N-(acyl)-sphingosylphosphoethanolamine = an N-(acyl)-sphingosyl-1,3-cyclic phosphate + ethanolamine. The enzyme catalyses a 1-acyl-sn-glycero-3-phosphocholine = a 1-acyl-sn-glycero-2,3-cyclic phosphate + choline. It catalyses the reaction a 1-acyl-sn-glycero-3-phosphoethanolamine = a 1-acyl-sn-glycero-2,3-cyclic phosphate + ethanolamine. Dermonecrotic toxins cleave the phosphodiester linkage between the phosphate and headgroup of certain phospholipids (sphingolipid and lysolipid substrates), forming an alcohol (often choline) and a cyclic phosphate. This toxin acts on sphingomyelin (SM). It may also act on ceramide phosphoethanolamine (CPE), lysophosphatidylcholine (LPC) and lysophosphatidylethanolamine (LPE), but not on lysophosphatidylserine (LPS), and lysophosphatidylglycerol (LPG). It acts by transphosphatidylation, releasing exclusively cyclic phosphate products as second products. Induces dermonecrosis, hemolysis, increased vascular permeability, edema, inflammatory response, and platelet aggregation. This chain is Dermonecrotic toxin LdSicTox-alphaIB3ai, found in Loxosceles deserta (Desert recluse spider).